A 271-amino-acid polypeptide reads, in one-letter code: tRNA (guanine-N(7)-)-methyltransferase (271 aa).

S-adenosyl-L-methionine is bound by residues E95, E120, D147, and D175. Residue D175 is part of the active site. Residues K179, D211, and 249–252 (THFE) each bind substrate.

This sequence belongs to the class I-like SAM-binding methyltransferase superfamily. TrmB family.

The enzyme catalyses guanosine(46) in tRNA + S-adenosyl-L-methionine = N(7)-methylguanosine(46) in tRNA + S-adenosyl-L-homocysteine. It participates in tRNA modification; N(7)-methylguanine-tRNA biosynthesis. Catalyzes the formation of N(7)-methylguanine at position 46 (m7G46) in tRNA. In Rhodopirellula baltica (strain DSM 10527 / NCIMB 13988 / SH1), this protein is tRNA (guanine-N(7)-)-methyltransferase.